A 185-amino-acid chain; its full sequence is Ribosome-recycling factor (185 aa).

It belongs to the RRF family.

The protein localises to the cytoplasm. Its function is as follows. Responsible for the release of ribosomes from messenger RNA at the termination of protein biosynthesis. May increase the efficiency of translation by recycling ribosomes from one round of translation to another. This Saccharophagus degradans (strain 2-40 / ATCC 43961 / DSM 17024) protein is Ribosome-recycling factor.